Here is a 292-residue protein sequence, read N- to C-terminus: Probable endonuclease 4 (292 aa).

His-69, His-109, Glu-145, Asp-179, His-182, His-216, Asp-229, His-231, and Glu-261 together coordinate Zn(2+).

Belongs to the AP endonuclease 2 family. Requires Zn(2+) as cofactor.

It carries out the reaction Endonucleolytic cleavage to 5'-phosphooligonucleotide end-products.. Its function is as follows. Endonuclease IV plays a role in DNA repair. It cleaves phosphodiester bonds at apurinic or apyrimidinic (AP) sites, generating a 3'-hydroxyl group and a 5'-terminal sugar phosphate. The chain is Probable endonuclease 4 from Desulfotalea psychrophila (strain LSv54 / DSM 12343).